The primary structure comprises 279 residues: Ribose-phosphate pyrophosphokinase (279 aa).

ATP contacts are provided by residues 31–33 and 88–89; these read DGE and RQ. Residues H121 and D159 each contribute to the Mg(2+) site. K182 is a catalytic residue. D-ribose 5-phosphate contacts are provided by residues R184, D208, and 212–216; that span reads STGGT.

It belongs to the ribose-phosphate pyrophosphokinase family. Class III (archaeal) subfamily. Mg(2+) serves as cofactor.

It is found in the cytoplasm. It carries out the reaction D-ribose 5-phosphate + ATP = 5-phospho-alpha-D-ribose 1-diphosphate + AMP + H(+). Its pathway is metabolic intermediate biosynthesis; 5-phospho-alpha-D-ribose 1-diphosphate biosynthesis; 5-phospho-alpha-D-ribose 1-diphosphate from D-ribose 5-phosphate (route I): step 1/1. Its function is as follows. Involved in the biosynthesis of the central metabolite phospho-alpha-D-ribosyl-1-pyrophosphate (PRPP) via the transfer of pyrophosphoryl group from ATP to 1-hydroxyl of ribose-5-phosphate (Rib-5-P). The protein is Ribose-phosphate pyrophosphokinase of Pyrococcus furiosus (strain ATCC 43587 / DSM 3638 / JCM 8422 / Vc1).